We begin with the raw amino-acid sequence, 307 residues long: Protease HtpX homolog (307 aa).

2 helical membrane passes run 10–30 (VITI…AYGL) and 40–60 (ISII…QWLV). H144 provides a ligand contact to Zn(2+). The active site involves E145. H148 is a Zn(2+) binding site. Transmembrane regions (helical) follow at residues 156-176 (LLLA…SMIF) and 187-207 (FFLV…MILG). Position 213 (E213) interacts with Zn(2+).

It belongs to the peptidase M48B family. Requires Zn(2+) as cofactor.

Its subcellular location is the cell membrane. In Picrophilus torridus (strain ATCC 700027 / DSM 9790 / JCM 10055 / NBRC 100828 / KAW 2/3), this protein is Protease HtpX homolog.